The primary structure comprises 436 residues: Cytokine receptor-like factor 3 (436 aa).

Positions 9–87 (LMQEAWESID…VSAIEQENIK (79 aa)) form a coiled coil. Residues 177–270 (PPVQIEELIE…LQTSRTTLVP (94 aa)) enclose the Fibronectin type-III domain.

This sequence belongs to the cytokine receptor-like factor 3 family.

Its subcellular location is the cytoplasm. Functionally, may play a role in the negative regulation of cell cycle progression. The polypeptide is Cytokine receptor-like factor 3 (crlf3) (Xenopus laevis (African clawed frog)).